Reading from the N-terminus, the 371-residue chain is Histidinol-phosphate aminotransferase (371 aa).

Position 228 is an N6-(pyridoxal phosphate)lysine (lysine 228).

It belongs to the class-II pyridoxal-phosphate-dependent aminotransferase family. Histidinol-phosphate aminotransferase subfamily. Pyridoxal 5'-phosphate serves as cofactor.

It catalyses the reaction L-histidinol phosphate + 2-oxoglutarate = 3-(imidazol-4-yl)-2-oxopropyl phosphate + L-glutamate. It participates in amino-acid biosynthesis; L-histidine biosynthesis; L-histidine from 5-phospho-alpha-D-ribose 1-diphosphate: step 7/9. This is Histidinol-phosphate aminotransferase from Methanococcus maripaludis (strain C6 / ATCC BAA-1332).